We begin with the raw amino-acid sequence, 290 residues long: Chitinase 10 (290 aa).

The N-terminal stretch at Met-1–Gly-28 is a signal peptide. 2 disulfides stabilise this stretch: Cys-70–Cys-132 and Cys-144–Cys-153. Residue Glu-114 is the Proton donor of the active site. Residues Asn-193 and Asn-234 are each glycosylated (N-linked (GlcNAc...) asparagine). Cys-252 and Cys-284 form a disulfide bridge.

This sequence belongs to the glycosyl hydrolase 19 family. Chitinase class I subfamily. Expressed at low levels in roots, leaves and meristems.

The enzyme catalyses Random endo-hydrolysis of N-acetyl-beta-D-glucosaminide (1-&gt;4)-beta-linkages in chitin and chitodextrins.. This chain is Chitinase 10 (Cht10), found in Oryza sativa subsp. japonica (Rice).